Here is a 236-residue protein sequence, read N- to C-terminus: THO complex subunit 7B (236 aa).

Residues 99–228 (EANLREKESF…IRSASEDQRN (130 aa)) are a coiled coil.

This sequence belongs to the THOC7 family. As to quaternary structure, component of the THO complex, which is composed of THO1, THO2, THO3, THO5, THO6 and THO7.

It is found in the nucleus. Its function is as follows. Acts as a component of the THO subcomplex of the TREX complex which is thought to couple mRNA transcription, processing and nuclear export. This Arabidopsis thaliana (Mouse-ear cress) protein is THO complex subunit 7B (THO7B).